The chain runs to 200 residues: Recombination protein RecR (200 aa).

The segment at 58 to 75 adopts a C4-type zinc-finger fold; that stretch reads CPTCFCLKSHPESVCSFC. Residues 82–177 enclose the Toprim domain; it reads SILCIVATPK…SVSRLALGLP (96 aa).

Belongs to the RecR family.

In terms of biological role, may play a role in DNA repair. It seems to be involved in an RecBC-independent recombinational process of DNA repair. It may act with RecF and RecO. The polypeptide is Recombination protein RecR (Chlamydia abortus (strain DSM 27085 / S26/3) (Chlamydophila abortus)).